The primary structure comprises 409 residues: Tetracenomycin polyketide synthase ketoacyl synthase beta subunit (409 aa).

A Ketosynthase family 3 (KS3) domain is found at 4–407 (PAPVVVTGLG…GFNSALVVRR (404 aa)).

The protein belongs to the thiolase-like superfamily. Beta-ketoacyl-ACP synthases family. The tetracenomycin polyketide synthase (TCM PKS) is composed of a ketosynthase complex (TcmKL), an acyl carrier protein (TcmM), a cyclase (TcmN) and a probable second cyclase (TcmJ). TcmK and TcmL form a heterodimeric complex.

The enzyme catalyses 10 malonyl-CoA + 8 H(+) = tetracenomycin F2 + 10 CO2 + 10 CoA + 2 H2O. Its pathway is antibiotic biosynthesis; tetracenomycin C biosynthesis. Involved in the biosynthesis of tetracenomycin C (TCM C). Part of a type II polyketide synthase (PKS) that catalyzes the synthesis of tetracenomycin F2 (TCM F2), a precursor of TCM C, from malonyl-CoA. TcmK and TcmL form a heterodimeric alpha-beta complex that catalyzes the condensation reactions between the growing acyl-enzyme chain and the malonyl-CoA extender units. This is Tetracenomycin polyketide synthase ketoacyl synthase beta subunit from Streptomyces glaucescens.